A 256-amino-acid chain; its full sequence is Small ribosomal subunit protein uS2 (256 aa).

This sequence belongs to the universal ribosomal protein uS2 family.

This is Small ribosomal subunit protein uS2 from Brucella melitensis biotype 1 (strain ATCC 23456 / CCUG 17765 / NCTC 10094 / 16M).